The primary structure comprises 492 residues: Bifunctional protein GlmU (492 aa).

The interval 1–241 is pyrophosphorylase; the sequence is MIPENTGPAA…RWQVEGANDR (241 aa). Residues 14 to 17, Lys28, Gln81, 86 to 87, 112 to 114, Gly151, Glu166, Asn181, and Asn239 each bind UDP-N-acetyl-alpha-D-glucosamine; these read LAAG, GT, and YGD. Asp114 serves as a coordination point for Mg(2+). Asn239 contributes to the Mg(2+) binding site. Positions 242-262 are linker; that stretch reads VQLAALGAELNRRTVEAWMRA. The tract at residues 263 to 492 is N-acetyltransferase; sequence GVTVVDPSTT…STPASTEEGK (230 aa). Residues Arg344 and Lys362 each contribute to the UDP-N-acetyl-alpha-D-glucosamine site. Residue His374 is the Proton acceptor of the active site. Tyr377 and Asn388 together coordinate UDP-N-acetyl-alpha-D-glucosamine. Residues 397 to 398, Ser416, and Ala434 each bind acetyl-CoA; that span reads NY. The interval 460–492 is disordered; it reads WVPANRPGSRSAELAQAAINNSSSTPASTEEGK. Positions 477-492 are enriched in polar residues; sequence AINNSSSTPASTEEGK.

In the N-terminal section; belongs to the N-acetylglucosamine-1-phosphate uridyltransferase family. This sequence in the C-terminal section; belongs to the transferase hexapeptide repeat family. Homotrimer. Mg(2+) serves as cofactor.

Its subcellular location is the cytoplasm. It carries out the reaction alpha-D-glucosamine 1-phosphate + acetyl-CoA = N-acetyl-alpha-D-glucosamine 1-phosphate + CoA + H(+). The enzyme catalyses N-acetyl-alpha-D-glucosamine 1-phosphate + UTP + H(+) = UDP-N-acetyl-alpha-D-glucosamine + diphosphate. The protein operates within nucleotide-sugar biosynthesis; UDP-N-acetyl-alpha-D-glucosamine biosynthesis; N-acetyl-alpha-D-glucosamine 1-phosphate from alpha-D-glucosamine 6-phosphate (route II): step 2/2. It functions in the pathway nucleotide-sugar biosynthesis; UDP-N-acetyl-alpha-D-glucosamine biosynthesis; UDP-N-acetyl-alpha-D-glucosamine from N-acetyl-alpha-D-glucosamine 1-phosphate: step 1/1. Its pathway is bacterial outer membrane biogenesis; LPS lipid A biosynthesis. In terms of biological role, catalyzes the last two sequential reactions in the de novo biosynthetic pathway for UDP-N-acetylglucosamine (UDP-GlcNAc). The C-terminal domain catalyzes the transfer of acetyl group from acetyl coenzyme A to glucosamine-1-phosphate (GlcN-1-P) to produce N-acetylglucosamine-1-phosphate (GlcNAc-1-P), which is converted into UDP-GlcNAc by the transfer of uridine 5-monophosphate (from uridine 5-triphosphate), a reaction catalyzed by the N-terminal domain. The polypeptide is Bifunctional protein GlmU (Pseudarthrobacter chlorophenolicus (strain ATCC 700700 / DSM 12829 / CIP 107037 / JCM 12360 / KCTC 9906 / NCIMB 13794 / A6) (Arthrobacter chlorophenolicus)).